A 449-amino-acid polypeptide reads, in one-letter code: UDP-N-acetylglucosamine 1-carboxyvinyltransferase (449 aa).

K51–N52 provides a ligand contact to phosphoenolpyruvate. UDP-N-acetyl-alpha-D-glucosamine is bound at residue R121. The active-site Proton donor is the C145. C145 carries the 2-(S-cysteinyl)pyruvic acid O-phosphothioketal modification. Residues R150–Q154, D333, and I355 contribute to the UDP-N-acetyl-alpha-D-glucosamine site.

It belongs to the EPSP synthase family. MurA subfamily.

It is found in the cytoplasm. The enzyme catalyses phosphoenolpyruvate + UDP-N-acetyl-alpha-D-glucosamine = UDP-N-acetyl-3-O-(1-carboxyvinyl)-alpha-D-glucosamine + phosphate. The protein operates within cell wall biogenesis; peptidoglycan biosynthesis. In terms of biological role, cell wall formation. Adds enolpyruvyl to UDP-N-acetylglucosamine. The sequence is that of UDP-N-acetylglucosamine 1-carboxyvinyltransferase from Burkholderia mallei (strain ATCC 23344).